Reading from the N-terminus, the 968-residue chain is RNA polymerase-associated protein RapA (968 aa).

In terms of domain architecture, Helicase ATP-binding spans 164–334; the sequence is DVGRRHAPRV…FARLRLLDPN (171 aa). 177-184 is a binding site for ATP; the sequence is DEVGLGKT. Positions 280-283 match the DEAH box motif; that stretch reads DEAH. The Helicase C-terminal domain maps to 490–662; the sequence is RVEWLMGYLT…YLASPVQTEG (173 aa).

This sequence belongs to the SNF2/RAD54 helicase family. RapA subfamily. In terms of assembly, interacts with the RNAP. Has a higher affinity for the core RNAP than for the holoenzyme. Its ATPase activity is stimulated by binding to RNAP.

Transcription regulator that activates transcription by stimulating RNA polymerase (RNAP) recycling in case of stress conditions such as supercoiled DNA or high salt concentrations. Probably acts by releasing the RNAP, when it is trapped or immobilized on tightly supercoiled DNA. Does not activate transcription on linear DNA. Probably not involved in DNA repair. In Shigella sonnei (strain Ss046), this protein is RNA polymerase-associated protein RapA.